Here is a 477-residue protein sequence, read N- to C-terminus: Prolyl tri/tetrapeptidyl aminopeptidase (477 aa).

An N-terminal signal peptide occupies residues 1 to 27; it reads MRKALRSLLAASMLIGAIGAGSATAEA. A propeptide spanning residues 28–33 is cleaved from the precursor; the sequence is ASITAP. The disordered stretch occupies residues 448-477; that stretch reads QKDEKAAKPLAPFDAKLDRVKNDKQSALRP. Residues 462–477 are compositionally biased toward basic and acidic residues; sequence AKLDRVKNDKQSALRP.

It belongs to the peptidase S37 family.

Its subcellular location is the secreted. It localises to the cell surface. With respect to regulation, completely inhibited by the serine protease inhibitor phenylmethylsulfonyl fluoride. Partially inhibited by the serine protease inhibitor Pefabloc. Not inhibited by cysteine proteinase-specific or metalloproteinase-specific inhibitors. Not inhibited by prolinal or its derivatives. EDTA and EGTA both partially inhibit this enzyme. EDTA has no effect on activity. Functionally, has proline-specific tripeptidyl aminopeptidase and tetrapeptidyl aminopeptidase activity. Activity is highest against tripeptides containing an Ala-Pro motif. Involved in the final processing of transglutaminase, by removing either the tetrapeptide Phe-Arg-Ala-Pro left after TAMEP or SAM-P45 hydrolysis, or the tripeptide Arg-Ala-Pro left after SGMP II hydrolysis in a single step. This is Prolyl tri/tetrapeptidyl aminopeptidase (ptp) from Streptomyces mobaraensis (Streptoverticillium mobaraense).